The sequence spans 661 residues: Pentatricopeptide repeat-containing protein At5g66631 (661 aa).

PPR repeat units lie at residues 139 to 173, 176 to 210, 211 to 245, 246 to 280, 410 to 444, 445 to 475, 484 to 518, 519 to 553, and 554 to 588; these read VHFS…GEEK, CTES…GGIP, NSRT…RITR, TLKH…GKFP, DAYT…GIKL, PFST…DRTL, LMLL…GVSP, DIQT…GLEP, and DPYM…NLMP.

This sequence belongs to the PPR family. P subfamily.

The protein is Pentatricopeptide repeat-containing protein At5g66631 of Arabidopsis thaliana (Mouse-ear cress).